A 411-amino-acid chain; its full sequence is Arginine deiminase (411 aa).

The active-site Amidino-cysteine intermediate is cysteine 401.

The protein belongs to the arginine deiminase family.

The protein localises to the cytoplasm. The enzyme catalyses L-arginine + H2O = L-citrulline + NH4(+). It functions in the pathway amino-acid degradation; L-arginine degradation via ADI pathway; carbamoyl phosphate from L-arginine: step 1/2. The chain is Arginine deiminase from Streptococcus equi subsp. zooepidemicus (strain MGCS10565).